Here is a 181-residue protein sequence, read N- to C-terminus: Large ribosomal subunit protein uL6 (181 aa).

It belongs to the universal ribosomal protein uL6 family. In terms of assembly, part of the 50S ribosomal subunit.

Functionally, this protein binds to the 23S rRNA, and is important in its secondary structure. It is located near the subunit interface in the base of the L7/L12 stalk, and near the tRNA binding site of the peptidyltransferase center. The chain is Large ribosomal subunit protein uL6 from Synechococcus sp. (strain CC9605).